Consider the following 264-residue polypeptide: Thymidylate synthase (264 aa).

Arginine 21 lines the dUMP pocket. Histidine 51 contributes to the (6R)-5,10-methylene-5,6,7,8-tetrahydrofolate binding site. 126 to 127 (RR) is a binding site for dUMP. The Nucleophile role is filled by cysteine 146. DUMP-binding positions include 166-169 (RSAD), asparagine 177, and 207-209 (HLY). (6R)-5,10-methylene-5,6,7,8-tetrahydrofolate is bound at residue aspartate 169. Alanine 263 contacts (6R)-5,10-methylene-5,6,7,8-tetrahydrofolate.

Belongs to the thymidylate synthase family. Bacterial-type ThyA subfamily. Homodimer.

Its subcellular location is the cytoplasm. It carries out the reaction dUMP + (6R)-5,10-methylene-5,6,7,8-tetrahydrofolate = 7,8-dihydrofolate + dTMP. Its pathway is pyrimidine metabolism; dTTP biosynthesis. Catalyzes the reductive methylation of 2'-deoxyuridine-5'-monophosphate (dUMP) to 2'-deoxythymidine-5'-monophosphate (dTMP) while utilizing 5,10-methylenetetrahydrofolate (mTHF) as the methyl donor and reductant in the reaction, yielding dihydrofolate (DHF) as a by-product. This enzymatic reaction provides an intracellular de novo source of dTMP, an essential precursor for DNA biosynthesis. This is Thymidylate synthase from Azoarcus sp. (strain BH72).